Consider the following 143-residue polypeptide: ATP synthase subunit b' (143 aa).

The helical transmembrane segment at 6-26 threads the bilayer; the sequence is ATLPLMALQFVLLAIILNAIF.

Belongs to the ATPase B chain family. As to quaternary structure, F-type ATPases have 2 components, F(1) - the catalytic core - and F(0) - the membrane proton channel. F(1) has five subunits: alpha(3), beta(3), gamma(1), delta(1), epsilon(1). F(0) has four main subunits: a(1), b(1), b'(1) and c(10-14). The alpha and beta chains form an alternating ring which encloses part of the gamma chain. F(1) is attached to F(0) by a central stalk formed by the gamma and epsilon chains, while a peripheral stalk is formed by the delta, b and b' chains.

It localises to the cellular thylakoid membrane. In terms of biological role, f(1)F(0) ATP synthase produces ATP from ADP in the presence of a proton or sodium gradient. F-type ATPases consist of two structural domains, F(1) containing the extramembraneous catalytic core and F(0) containing the membrane proton channel, linked together by a central stalk and a peripheral stalk. During catalysis, ATP synthesis in the catalytic domain of F(1) is coupled via a rotary mechanism of the central stalk subunits to proton translocation. Its function is as follows. Component of the F(0) channel, it forms part of the peripheral stalk, linking F(1) to F(0). The b'-subunit is a diverged and duplicated form of b found in plants and photosynthetic bacteria. The polypeptide is ATP synthase subunit b' (Crocosphaera subtropica (strain ATCC 51142 / BH68) (Cyanothece sp. (strain ATCC 51142))).